The chain runs to 332 residues: Hygromycin-B 7''-O-kinase (332 aa).

The active-site Proton acceptor is D223.

The protein belongs to the aminoglycoside phosphotransferase family.

It catalyses the reaction hygromycin B + ATP = 7''-O-phosphohygromycin B + ADP + H(+). In terms of biological role, the aminoglycoside phosphotransferases achieve inactivation of their antibiotic substrates by phosphorylation. The protein is Hygromycin-B 7''-O-kinase (hyg) of Streptomyces hygroscopicus.